The primary structure comprises 446 residues: Glucose-6-phosphate isomerase (446 aa).

The active-site Proton donor is E287. Residues H308 and K422 contribute to the active site.

The protein belongs to the GPI family.

It localises to the cytoplasm. The enzyme catalyses alpha-D-glucose 6-phosphate = beta-D-fructose 6-phosphate. It participates in carbohydrate biosynthesis; gluconeogenesis. The protein operates within carbohydrate degradation; glycolysis; D-glyceraldehyde 3-phosphate and glycerone phosphate from D-glucose: step 2/4. Its function is as follows. Catalyzes the reversible isomerization of glucose-6-phosphate to fructose-6-phosphate. In Lactobacillus helveticus (strain DPC 4571), this protein is Glucose-6-phosphate isomerase.